Here is an 85-residue protein sequence, read N- to C-terminus: Small ribosomal subunit protein bS16 (85 aa).

The protein belongs to the bacterial ribosomal protein bS16 family.

The sequence is that of Small ribosomal subunit protein bS16 from Nitrosomonas eutropha (strain DSM 101675 / C91 / Nm57).